The sequence spans 335 residues: NADH-quinone oxidoreductase subunit H (335 aa).

The next 8 helical transmembrane spans lie at 15 to 35 (VVKA…LSFV), 81 to 101 (MIFT…FSII), 114 to 134 (IGLL…LFAG), 154 to 174 (VSYE…VGSF), 187 to 207 (LWFI…GVAV), 238 to 258 (FFVG…TLFF), 270 to 290 (QVPF…FILL), and 307 to 327 (WKFC…IVLY).

This sequence belongs to the complex I subunit 1 family. NDH-1 is composed of 13 different subunits. Subunits NuoA, H, J, K, L, M, N constitute the membrane sector of the complex.

It localises to the cell inner membrane. It catalyses the reaction a quinone + NADH + 5 H(+)(in) = a quinol + NAD(+) + 4 H(+)(out). NDH-1 shuttles electrons from NADH, via FMN and iron-sulfur (Fe-S) centers, to quinones in the respiratory chain. The immediate electron acceptor for the enzyme in this species is believed to be ubiquinone. Couples the redox reaction to proton translocation (for every two electrons transferred, four hydrogen ions are translocated across the cytoplasmic membrane), and thus conserves the redox energy in a proton gradient. This subunit may bind ubiquinone. The protein is NADH-quinone oxidoreductase subunit H of Pseudomonas putida (strain GB-1).